Consider the following 205-residue polypeptide: Large ribosomal subunit protein uL4 (205 aa).

The interval 53 to 77 (RAAVRGGGRKPWKQKGTGRARAGSI) is disordered. Residues 59–70 (GGRKPWKQKGTG) show a composition bias toward basic residues.

The protein belongs to the universal ribosomal protein uL4 family. In terms of assembly, part of the 50S ribosomal subunit.

Its function is as follows. One of the primary rRNA binding proteins, this protein initially binds near the 5'-end of the 23S rRNA. It is important during the early stages of 50S assembly. It makes multiple contacts with different domains of the 23S rRNA in the assembled 50S subunit and ribosome. Functionally, forms part of the polypeptide exit tunnel. This is Large ribosomal subunit protein uL4 from Acidithiobacillus ferrooxidans (strain ATCC 23270 / DSM 14882 / CIP 104768 / NCIMB 8455) (Ferrobacillus ferrooxidans (strain ATCC 23270)).